Consider the following 446-residue polypeptide: Beta-glucosidase A (446 aa).

E166 serves as the catalytic Proton donor. Catalysis depends on E351, which acts as the Nucleophile.

Belongs to the glycosyl hydrolase 1 family.

It carries out the reaction Hydrolysis of terminal, non-reducing beta-D-glucosyl residues with release of beta-D-glucose.. It functions in the pathway glycan metabolism; cellulose degradation. This is Beta-glucosidase A (bglA) from Thermotoga maritima (strain ATCC 43589 / DSM 3109 / JCM 10099 / NBRC 100826 / MSB8).